Consider the following 500-residue polypeptide: NAD(P)H-quinone oxidoreductase chain 4, chloroplastic (500 aa).

Transmembrane regions (helical) follow at residues 4–24 (FPWL…IFLL), 37–57 (LCIC…HFQL), 87–107 (IGPI…AWPV), 111–131 (AQLF…SFSS), 134–154 (LLLF…LLSM), 167–187 (FILY…GIGL), 208–228 (ALEV…LPII), 242–262 (HYST…YGLV), 272–292 (AHCL…IYAA), 305–325 (IAYS…SLSD), 330–350 (GAIL…FLAG), 386–406 (LALP…GIIT), 416–436 (ILIA…SLSM), and 462–482 (LFVS…PDFV).

The protein belongs to the complex I subunit 4 family.

It localises to the plastid. The protein localises to the chloroplast thylakoid membrane. The catalysed reaction is a plastoquinone + NADH + (n+1) H(+)(in) = a plastoquinol + NAD(+) + n H(+)(out). It catalyses the reaction a plastoquinone + NADPH + (n+1) H(+)(in) = a plastoquinol + NADP(+) + n H(+)(out). In Oenothera parviflora (Small-flowered evening primrose), this protein is NAD(P)H-quinone oxidoreductase chain 4, chloroplastic.